An 85-amino-acid chain; its full sequence is Turripeptide PaIAa (85 aa).

Belongs to the turripeptide family. In terms of tissue distribution, expressed by the venom duct.

The protein resides in the secreted. Its function is as follows. Is lethal to drosophila larvae. This is Turripeptide PaIAa from Polystira albida (White giant-turris).